The primary structure comprises 332 residues: Biotin synthase (332 aa).

The region spanning 47 to 273 (YYGNKVKLNM…MNPTKEIRIA (227 aa)) is the Radical SAM core domain. 3 residues coordinate [4Fe-4S] cluster: Cys65, Cys69, and Cys72. 4 residues coordinate [2Fe-2S] cluster: Cys109, Cys141, Cys201, and Arg271.

Belongs to the radical SAM superfamily. Biotin synthase family. As to quaternary structure, homodimer. The cofactor is [4Fe-4S] cluster. It depends on [2Fe-2S] cluster as a cofactor.

It carries out the reaction (4R,5S)-dethiobiotin + (sulfur carrier)-SH + 2 reduced [2Fe-2S]-[ferredoxin] + 2 S-adenosyl-L-methionine = (sulfur carrier)-H + biotin + 2 5'-deoxyadenosine + 2 L-methionine + 2 oxidized [2Fe-2S]-[ferredoxin]. The protein operates within cofactor biosynthesis; biotin biosynthesis; biotin from 7,8-diaminononanoate: step 2/2. In terms of biological role, catalyzes the conversion of dethiobiotin (DTB) to biotin by the insertion of a sulfur atom into dethiobiotin via a radical-based mechanism. The chain is Biotin synthase from Geobacillus thermodenitrificans (strain NG80-2).